A 222-amino-acid chain; its full sequence is 2-C-methyl-D-erythritol 4-phosphate cytidylyltransferase (222 aa).

The protein belongs to the IspD/TarI cytidylyltransferase family. IspD subfamily.

The catalysed reaction is 2-C-methyl-D-erythritol 4-phosphate + CTP + H(+) = 4-CDP-2-C-methyl-D-erythritol + diphosphate. The protein operates within isoprenoid biosynthesis; isopentenyl diphosphate biosynthesis via DXP pathway; isopentenyl diphosphate from 1-deoxy-D-xylulose 5-phosphate: step 2/6. In terms of biological role, catalyzes the formation of 4-diphosphocytidyl-2-C-methyl-D-erythritol from CTP and 2-C-methyl-D-erythritol 4-phosphate (MEP). This is 2-C-methyl-D-erythritol 4-phosphate cytidylyltransferase from Thermotoga petrophila (strain ATCC BAA-488 / DSM 13995 / JCM 10881 / RKU-1).